The chain runs to 343 residues: GTPase Obg (343 aa).

The Obg domain occupies 1-159 (MKFLDEAKVY…HWLWLRLKLI (159 aa)). Residues 160–327 (ADAGLVGLPN…ALRALLAAMD (168 aa)) form the OBG-type G domain. GTP contacts are provided by residues 166–173 (GLPNAGKS), 191–195 (FTTLH), 212–215 (DIPG), 279–282 (SKAD), and 308–310 (SAA). Positions 173 and 193 each coordinate Mg(2+).

It belongs to the TRAFAC class OBG-HflX-like GTPase superfamily. OBG GTPase family. As to quaternary structure, monomer. Mg(2+) serves as cofactor.

The protein localises to the cytoplasm. Functionally, an essential GTPase which binds GTP, GDP and possibly (p)ppGpp with moderate affinity, with high nucleotide exchange rates and a fairly low GTP hydrolysis rate. Plays a role in control of the cell cycle, stress response, ribosome biogenesis and in those bacteria that undergo differentiation, in morphogenesis control. The chain is GTPase Obg from Methylobacterium sp. (strain 4-46).